Reading from the N-terminus, the 692-residue chain is E3 ubiquitin-protein ligase MARCHF7 (692 aa).

M1 carries the N-acetylmethionine modification. 6 disordered regions span residues 1-165, 201-280, 296-343, 360-425, 440-474, and 512-532; these read MESK…SHRS, STNH…GRRT, FFSR…RASE, LSQN…HLFR, SLGA…RNTG, and SSAD…PEKL. Basic and acidic residues predominate over residues 37-48; sequence YHSRDSSFRLDS. Polar residues-rich tracts occupy residues 61–83 and 95–132; these read PYQS…SQNQ and SCTN…SSMV. Over residues 140 to 153 the composition is skewed to basic and acidic residues; that stretch reads LMRERRDLERRRDS. Positions 201-214 are enriched in polar residues; that stretch reads STNHQLPSEHQTVP. The span at 215–233 shows a compositional bias: low complexity; sequence SSRDSSRSSFRSHFSPRQS. Over residues 235-272 the composition is skewed to polar residues; it reads SFRNSSHPAFSYLSSRNETPTISSSERAGSSQRPFQES. The span at 296-305 shows a compositional bias: low complexity; it reads FFSRRSSQDS. Residues 306 to 336 show a composition bias toward polar residues; sequence LNTRSLSSENYISPRTLTSQSRNNGASSSEV. 2 positions are modified to phosphoserine: S318 and S389. Residues 450–462 are compositionally biased toward low complexity; the sequence is ASGASGNASASGS. A compositionally biased stretch (basic and acidic residues) spans 516–532; it reads GKSEKAKSAPSRDPEKL. The RING-CH-type zinc finger occupies 545-615; sequence DEEEEGDLCR…ELCKEKLQLN (71 aa). Residues C553, C556, C571, C573, H581, C584, C605, and C608 each contribute to the Zn(2+) site. T687 carries the phosphothreonine modification. At S688 the chain carries Phosphoserine.

It is found in the cytoplasm. It catalyses the reaction S-ubiquitinyl-[E2 ubiquitin-conjugating enzyme]-L-cysteine + [acceptor protein]-L-lysine = [E2 ubiquitin-conjugating enzyme]-L-cysteine + N(6)-ubiquitinyl-[acceptor protein]-L-lysine.. Its pathway is protein modification; protein ubiquitination. Functionally, E3 ubiquitin-protein ligase which may specifically enhance the E2 activity of HIP2. E3 ubiquitin ligases accept ubiquitin from an E2 ubiquitin-conjugating enzyme in the form of a thioester and then directly transfer the ubiquitin to targeted substrates. May be involved in T-cell proliferation by regulating LIF secretion. May play a role in lysosome homeostasis. Promotes 'Lys-6', 'Lys-11' and 'Lys-63'-linked mixed polyubiquitination on ATG14 leading to the inhibition of autophagy by impairing the interaction between ATG14 and STX7. Participates in the dopamine-mediated negative regulation of the NLRP3 inflammasome by promoting its uibiquitination and subsequent degradation. The chain is E3 ubiquitin-protein ligase MARCHF7 (Marchf7) from Rattus norvegicus (Rat).